The primary structure comprises 340 residues: Beta-D-galactofuranosidase xynD (340 aa).

Positions 1 to 24 (MKHHNYYPSTCLSILPFLLPLTMS) are cleaved as a signal peptide. Aspartate 51 functions as the Proton acceptor in the catalytic mechanism. N-linked (GlcNAc...) asparagine glycosylation is found at asparagine 96 and asparagine 165. The Proton donor role is filled by glutamate 222. Asparagine 302 and asparagine 328 each carry an N-linked (GlcNAc...) asparagine glycan.

Belongs to the glycosyl hydrolase 43 family.

The protein localises to the secreted. It functions in the pathway glycan degradation. Glycoside hydrolase family 43 beta-D-galactofuranosidase involved in the degradation of beta-galactofuranoside (Galf)-containing glycans such as galactomannan or O-glycans. Is not active on beta-1,5- or beta-1,6-linked beta-D-galactofuranose (Galf) residues. In Aspergillus niger (strain ATCC MYA-4892 / CBS 513.88 / FGSC A1513), this protein is Beta-D-galactofuranosidase xynD.